The following is a 226-amino-acid chain: Orotidine 5'-phosphate decarboxylase (226 aa).

Residues Asp-8, Lys-30, 58-67 (DLKIHDIPNT), Thr-117, Arg-177, Gln-186, Gly-206, and Arg-207 each bind substrate. Lys-60 (proton donor) is an active-site residue.

The protein belongs to the OMP decarboxylase family. Type 1 subfamily. As to quaternary structure, homodimer.

The catalysed reaction is orotidine 5'-phosphate + H(+) = UMP + CO2. The protein operates within pyrimidine metabolism; UMP biosynthesis via de novo pathway; UMP from orotate: step 2/2. Its function is as follows. Catalyzes the decarboxylation of orotidine 5'-monophosphate (OMP) to uridine 5'-monophosphate (UMP). The chain is Orotidine 5'-phosphate decarboxylase from Campylobacter jejuni subsp. jejuni serotype O:6 (strain 81116 / NCTC 11828).